The primary structure comprises 626 residues: Solute carrier family 13 member 4 (626 aa).

The next 4 membrane-spanning stretches (helical) occupy residues 13-33 (LLLV…HPSS), 52-72 (AVPL…FGVL), 77-97 (VAAE…CVAA), and 113-133 (VLMA…CTTL). A compositionally biased stretch (polar residues) spans 217–228 (SITNPIKTANQH). The interval 217–252 (SITNPIKTANQHQGKKQHPSQEKPQVLTPSPRKQKL) is disordered. A run of 8 helical transmembrane segments spans residues 274–294 (YSAT…LIFL), 309–329 (FGTW…VSWF), 372–392 (ISYP…LWFT), 414–434 (ATVS…KPCF), 466–486 (IVIL…SGLS), 499–519 (LPPW…TEFV), 543–563 (PLYT…LPVG), and 590–610 (VIGL…LFHL).

The protein belongs to the SLC13A/DASS transporter (TC 2.A.47) family. NADC subfamily. In terms of tissue distribution, highly expressed in placenta and testis with intermediate levels in brain and lower levels in heart, thymus and liver.

Its subcellular location is the membrane. The enzyme catalyses sulfate(out) + 3 Na(+)(out) = sulfate(in) + 3 Na(+)(in). With respect to regulation, transport is inhibited by thiosulfate, phosphate, molybdate, selenate and tungstate. Not inhibited by oxalate, citrate, succinate, phenol red or 4,4'-diisothiocyanostilbene-2,2'-disulfonic acid (DIDS). Functionally, sodium:sulfate symporter that mediates sulfate reabsorption in the high endothelial venules (HEV). This is Solute carrier family 13 member 4 (SLC13A4) from Homo sapiens (Human).